A 1462-amino-acid chain; its full sequence is Tyrosine-protein phosphatase 69D (1462 aa).

Positions 1–28 (MALLYRRMSMLLNIILAYIFLCAICVQG) are cleaved as a signal peptide. Ig-like C2-type domains are found at residues 29–125 (SVKQ…TEFQ) and 131–230 (PSKV…KEIT). At 29–805 (SVKQEWAEIG…MDYYLSIGVK (777 aa)) the chain is on the extracellular side. N-linked (GlcNAc...) asparagine glycosylation is found at N40, N58, N64, N85, N109, N119, N162, N191, N196, N209, N255, N288, N302, N429, N442, N451, N516, N613, N701, and N755. C45 and C112 are disulfide-bonded. Residues C154 and C214 are joined by a disulfide bond. Fibronectin type-III domains lie at 237–332 (PQVS…TLSY), 334–435 (PIFI…TMDG), and 439–547 (KPTN…TPDA). A helical membrane pass occupies residues 806-823 (AGAVLLGVILVFIVLWVF). At 824-1462 (HHKKTKNELQ…LHHIAESTLD (639 aa)) the chain is on the cytoplasmic side. Tyrosine-protein phosphatase domains are found at residues 893–1156 (FLRE…LLDT) and 1187–1450 (LEVE…IINY). Catalysis depends on phosphocysteine intermediate residues C1097 and C1391.

The protein belongs to the protein-tyrosine phosphatase family. Receptor class subfamily.

It is found in the membrane. It catalyses the reaction O-phospho-L-tyrosyl-[protein] + H2O = L-tyrosyl-[protein] + phosphate. Its function is as follows. Possible cell adhesion receptor. This chain is Tyrosine-protein phosphatase 69D (Ptp69D), found in Drosophila melanogaster (Fruit fly).